The following is a 149-amino-acid chain: UPF0208 membrane protein PBPRA2797 (149 aa).

Helical transmembrane passes span 41–60 (FATR…QMAF) and 65–87 (ALPQ…LWWL).

Belongs to the UPF0208 family.

Its subcellular location is the cell inner membrane. This chain is UPF0208 membrane protein PBPRA2797, found in Photobacterium profundum (strain SS9).